Reading from the N-terminus, the 111-residue chain is Cytochrome c (111 aa).

Ala1 is subject to N-acetylalanine. Heme c is bound by residues Cys22, Cys25, and His26. The residue at position 80 (Lys80) is an N6,N6,N6-trimethyllysine. Met88 is a binding site for heme c. The residue at position 94 (Lys94) is an N6,N6,N6-trimethyllysine.

This sequence belongs to the cytochrome c family. In terms of processing, binds 1 heme c group covalently per subunit.

The protein resides in the mitochondrion intermembrane space. Functionally, electron carrier protein. The oxidized form of the cytochrome c heme group can accept an electron from the heme group of the cytochrome c1 subunit of cytochrome reductase. Cytochrome c then transfers this electron to the cytochrome oxidase complex, the final protein carrier in the mitochondrial electron-transport chain. This Guizotia abyssinica (Niger) protein is Cytochrome c.